We begin with the raw amino-acid sequence, 271 residues long: Putative hydro-lyase OCAR_7359/OCA5_c07590 (271 aa).

This sequence belongs to the D-glutamate cyclase family.

This is Putative hydro-lyase OCAR_7359/OCA5_c07590 from Afipia carboxidovorans (strain ATCC 49405 / DSM 1227 / KCTC 32145 / OM5) (Oligotropha carboxidovorans).